The sequence spans 251 residues: 5'-nucleotidase SurE (251 aa).

Asp-8, Asp-9, Ser-39, and Asn-91 together coordinate a divalent metal cation.

It belongs to the SurE nucleotidase family. A divalent metal cation serves as cofactor.

It localises to the cytoplasm. It carries out the reaction a ribonucleoside 5'-phosphate + H2O = a ribonucleoside + phosphate. Functionally, nucleotidase that shows phosphatase activity on nucleoside 5'-monophosphates. The polypeptide is 5'-nucleotidase SurE (Methylococcus capsulatus (strain ATCC 33009 / NCIMB 11132 / Bath)).